A 385-amino-acid chain; its full sequence is S-adenosylmethionine synthase (385 aa).

Histidine 16 contacts ATP. Mg(2+) is bound at residue aspartate 18. Glutamate 44 contributes to the K(+) binding site. L-methionine is bound by residues glutamate 57 and glutamine 100. The tract at residues 100–110 is flexible loop; the sequence is QSPDINQGVDR. ATP-binding positions include 164–166, 230–231, aspartate 239, 245–246, alanine 262, and lysine 266; these read DGK, KF, and RK. Residue aspartate 239 coordinates L-methionine. Lysine 270 contributes to the L-methionine binding site.

Belongs to the AdoMet synthase family. As to quaternary structure, homotetramer; dimer of dimers. Mg(2+) serves as cofactor. K(+) is required as a cofactor.

It is found in the cytoplasm. The enzyme catalyses L-methionine + ATP + H2O = S-adenosyl-L-methionine + phosphate + diphosphate. It participates in amino-acid biosynthesis; S-adenosyl-L-methionine biosynthesis; S-adenosyl-L-methionine from L-methionine: step 1/1. Its function is as follows. Catalyzes the formation of S-adenosylmethionine (AdoMet) from methionine and ATP. The overall synthetic reaction is composed of two sequential steps, AdoMet formation and the subsequent tripolyphosphate hydrolysis which occurs prior to release of AdoMet from the enzyme. This is S-adenosylmethionine synthase from Helicobacter acinonychis (strain Sheeba).